A 312-amino-acid polypeptide reads, in one-letter code: Lipoyl synthase (312 aa).

The [4Fe-4S] cluster site is built by Cys37, Cys42, Cys48, Cys67, Cys71, Cys74, and Ser281. Positions 52-270 (RDGPGTATFM…AVAEREFDFL (219 aa)) constitute a Radical SAM core domain.

It belongs to the radical SAM superfamily. Lipoyl synthase family. The cofactor is [4Fe-4S] cluster.

It localises to the cytoplasm. It carries out the reaction [[Fe-S] cluster scaffold protein carrying a second [4Fe-4S](2+) cluster] + N(6)-octanoyl-L-lysyl-[protein] + 2 oxidized [2Fe-2S]-[ferredoxin] + 2 S-adenosyl-L-methionine + 4 H(+) = [[Fe-S] cluster scaffold protein] + N(6)-[(R)-dihydrolipoyl]-L-lysyl-[protein] + 4 Fe(3+) + 2 hydrogen sulfide + 2 5'-deoxyadenosine + 2 L-methionine + 2 reduced [2Fe-2S]-[ferredoxin]. It participates in protein modification; protein lipoylation via endogenous pathway; protein N(6)-(lipoyl)lysine from octanoyl-[acyl-carrier-protein]: step 2/2. Its function is as follows. Catalyzes the radical-mediated insertion of two sulfur atoms into the C-6 and C-8 positions of the octanoyl moiety bound to the lipoyl domains of lipoate-dependent enzymes, thereby converting the octanoylated domains into lipoylated derivatives. The sequence is that of Lipoyl synthase from Halorubrum lacusprofundi (strain ATCC 49239 / DSM 5036 / JCM 8891 / ACAM 34).